A 131-amino-acid polypeptide reads, in one-letter code: Holo-[acyl-carrier-protein] synthase (131 aa).

Residues D8 and E57 each coordinate Mg(2+).

This sequence belongs to the P-Pant transferase superfamily. AcpS family. Mg(2+) is required as a cofactor.

It localises to the cytoplasm. The enzyme catalyses apo-[ACP] + CoA = holo-[ACP] + adenosine 3',5'-bisphosphate + H(+). In terms of biological role, transfers the 4'-phosphopantetheine moiety from coenzyme A to a Ser of acyl-carrier-protein. The sequence is that of Holo-[acyl-carrier-protein] synthase from Desulforudis audaxviator (strain MP104C).